Consider the following 94-residue polypeptide: uncharacterized protein (94 aa).

This is an uncharacterized protein from Escherichia coli (strain K12).